The sequence spans 504 residues: Cytochrome P450 6B6 (504 aa).

C445 lines the heme pocket.

It belongs to the cytochrome P450 family. The cofactor is heme.

The protein localises to the endoplasmic reticulum membrane. It localises to the microsome membrane. The catalysed reaction is an organic molecule + reduced [NADPH--hemoprotein reductase] + O2 = an alcohol + oxidized [NADPH--hemoprotein reductase] + H2O + H(+). The protein is Cytochrome P450 6B6 (CYP6B6) of Helicoverpa armigera (Cotton bollworm).